The primary structure comprises 205 residues: UPF0688 protein C1orf174 homolog (205 aa).

Over residues 1-18 (MRKRKLSDRVRCSARLKN) the composition is skewed to basic residues. 2 disordered regions span residues 1 to 128 (MRKR…PSKV) and 184 to 205 (AKEE…EGNI). Positions 46–63 (NTDKKSPKKLENDEKGLM) are enriched in basic and acidic residues. Positions 71-108 (INKTDNTASNESNAGNVNTCPSASPFSDLNEVSRNGLT) are enriched in polar residues. Over residues 187–196 (EEEDDDDDYA) the composition is skewed to acidic residues.

The protein belongs to the UPF0688 family.

Its subcellular location is the nucleus. The chain is UPF0688 protein C1orf174 homolog from Xenopus laevis (African clawed frog).